The sequence spans 353 residues: 3-isopropylmalate dehydrogenase (353 aa).

Residue 76–89 (GPKWDDPRAKVRPE) participates in NAD(+) binding. Substrate contacts are provided by R96, R106, R134, and D223. The Mg(2+) site is built by D223, D247, and D251. 281-293 (GSAPDIAGKGIAN) provides a ligand contact to NAD(+).

Belongs to the isocitrate and isopropylmalate dehydrogenases family. LeuB type 1 subfamily. As to quaternary structure, homodimer. Mg(2+) is required as a cofactor. Mn(2+) serves as cofactor.

It localises to the cytoplasm. It catalyses the reaction (2R,3S)-3-isopropylmalate + NAD(+) = 4-methyl-2-oxopentanoate + CO2 + NADH. It participates in amino-acid biosynthesis; L-leucine biosynthesis; L-leucine from 3-methyl-2-oxobutanoate: step 3/4. In terms of biological role, catalyzes the oxidation of 3-carboxy-2-hydroxy-4-methylpentanoate (3-isopropylmalate) to 3-carboxy-4-methyl-2-oxopentanoate. The product decarboxylates to 4-methyl-2 oxopentanoate. The chain is 3-isopropylmalate dehydrogenase from Anaeromyxobacter dehalogenans (strain 2CP-C).